A 201-amino-acid polypeptide reads, in one-letter code: Holliday junction branch migration complex subunit RuvA (201 aa).

The interval Met-1 to Thr-64 is domain I. The domain II stretch occupies residues Thr-65–Gln-143. Residues Leu-144–Ser-152 are flexible linker. The interval Asp-153–Arg-201 is domain III.

Belongs to the RuvA family. Homotetramer. Forms an RuvA(8)-RuvB(12)-Holliday junction (HJ) complex. HJ DNA is sandwiched between 2 RuvA tetramers; dsDNA enters through RuvA and exits via RuvB. An RuvB hexamer assembles on each DNA strand where it exits the tetramer. Each RuvB hexamer is contacted by two RuvA subunits (via domain III) on 2 adjacent RuvB subunits; this complex drives branch migration. In the full resolvosome a probable DNA-RuvA(4)-RuvB(12)-RuvC(2) complex forms which resolves the HJ.

It localises to the cytoplasm. Its function is as follows. The RuvA-RuvB-RuvC complex processes Holliday junction (HJ) DNA during genetic recombination and DNA repair, while the RuvA-RuvB complex plays an important role in the rescue of blocked DNA replication forks via replication fork reversal (RFR). RuvA specifically binds to HJ cruciform DNA, conferring on it an open structure. The RuvB hexamer acts as an ATP-dependent pump, pulling dsDNA into and through the RuvAB complex. HJ branch migration allows RuvC to scan DNA until it finds its consensus sequence, where it cleaves and resolves the cruciform DNA. This chain is Holliday junction branch migration complex subunit RuvA, found in Clostridium perfringens (strain 13 / Type A).